A 423-amino-acid polypeptide reads, in one-letter code: AP-1 complex subunit mu-1 (423 aa).

S2 is modified (N-acetylserine). Phosphothreonine occurs at positions 152, 154, and 223. Positions 168 to 421 (KNEVFLDVIE…ITQNGDYQLR (254 aa)) constitute an MHD domain.

This sequence belongs to the adaptor complexes medium subunit family. In terms of assembly, adaptor protein complex 1 (AP-1) is a heterotetramer composed of two large adaptins (gamma-type subunit AP1G1 and beta-type subunit AP1B1), a medium adaptin (mu-type subunit AP1M1 or AP1M2) and a small adaptin (sigma-type subunit AP1S1 or AP1S2 or AP1S3). Interacts with MARCHF11. Post-translationally, phosphorylation of membrane-bound AP1M1/AP1M2 increases its affinity for sorting signals.

The protein resides in the cytoplasmic vesicle. The protein localises to the clathrin-coated vesicle membrane. It is found in the golgi apparatus. Its function is as follows. Subunit of clathrin-associated adaptor protein complex 1 that plays a role in protein sorting in the trans-Golgi network (TGN) and endosomes. The AP complexes mediate the recruitment of clathrin to membranes and the recognition of sorting signals within the cytosolic tails of transmembrane cargo molecules. The protein is AP-1 complex subunit mu-1 of Rattus norvegicus (Rat).